An 836-amino-acid polypeptide reads, in one-letter code: Probable ribonuclease ZC3H12B (836 aa).

Residues 1–92 are disordered; it reads MTATAEVETP…SPCLDRPSFS (92 aa). Residues 8–28 are compositionally biased toward basic and acidic residues; the sequence is ETPKMEKSASKEEKQQPKQDS. Residues 35–46 show a composition bias toward acidic residues; sequence DSEEWMSSESDP. Polar residues predominate over residues 50–60; it reads SLKSSDNSKSC. Basic residues predominate over residues 70–80; the sequence is KEMHSKPHRQL. In terms of domain architecture, RNase NYN spans 190–345; it reads LRPVVIDGSN…LGRHGPSLEN (156 aa). The segment at 355–380 adopts a C3H1-type zinc-finger fold; the sequence is EHKKQPCPYGKKCTYGHKCKYYHPER.

The protein belongs to the ZC3H12 family. Mg(2+) serves as cofactor.

In terms of biological role, may function as RNase and regulate the levels of target RNA species. This is Probable ribonuclease ZC3H12B (ZC3H12B) from Homo sapiens (Human).